We begin with the raw amino-acid sequence, 326 residues long: GTP cyclohydrolase MptA (326 aa).

This sequence belongs to the GTP cyclohydrolase IV family. In terms of assembly, homodimer. Fe(2+) serves as cofactor.

The catalysed reaction is GTP + H2O = 7,8-dihydroneopterin 2',3'-cyclic phosphate + formate + diphosphate + H(+). The protein operates within cofactor biosynthesis; 5,6,7,8-tetrahydromethanopterin biosynthesis. Functionally, converts GTP to 7,8-dihydro-D-neopterin 2',3'-cyclic phosphate, the first intermediate in the biosynthesis of coenzyme methanopterin. In Methanoregula boonei (strain DSM 21154 / JCM 14090 / 6A8), this protein is GTP cyclohydrolase MptA.